We begin with the raw amino-acid sequence, 370 residues long: Coiled-coil domain-containing protein 89 (370 aa).

The tract at residues 1–38 (MPQEESAPRMDTPSSEEPLDKQNRKLEDQEEEMGFKEL) is disordered. The residue at position 12 (Thr-12) is a Phosphothreonine. The span at 18-38 (PLDKQNRKLEDQEEEMGFKEL) shows a compositional bias: basic and acidic residues. Residues 19–346 (LDKQNRKLED…YDELRLQSEA (328 aa)) are a coiled coil.

This sequence belongs to the CCDC89 family. As to quaternary structure, interacts with HEY1.

The protein resides in the cytoplasm. It localises to the nucleus. This chain is Coiled-coil domain-containing protein 89, found in Bos taurus (Bovine).